The primary structure comprises 38 residues: Kappa-theraphotoxin-Hm2a (38 aa).

Intrachain disulfides connect C2–C16, C9–C21, and C15–C32. Residue F38 is modified to Phenylalanine amide.

It belongs to the neurotoxin 10 (Hwtx-1) family. 13 (Hntx-13) subfamily. Expressed by the venom gland.

It localises to the secreted. Inhibitor of voltage-gated potassium channels. It specifically inhibits Kv2.1/KCNB1 channels. The polypeptide is Kappa-theraphotoxin-Hm2a (Heteroscodra maculata (Togo starburst tarantula)).